Consider the following 199-residue polypeptide: Fe/S biogenesis protein NfuA (199 aa).

2 residues coordinate [4Fe-4S] cluster: C156 and C159.

Belongs to the NfuA family. In terms of assembly, homodimer. It depends on [4Fe-4S] cluster as a cofactor.

In terms of biological role, involved in iron-sulfur cluster biogenesis. Binds a 4Fe-4S cluster, can transfer this cluster to apoproteins, and thereby intervenes in the maturation of Fe/S proteins. Could also act as a scaffold/chaperone for damaged Fe/S proteins. In Actinobacillus pleuropneumoniae serotype 5b (strain L20), this protein is Fe/S biogenesis protein NfuA.